The sequence spans 788 residues: Pre-rRNA-processing protein TSR1 homolog (788 aa).

Residues 1–40 (MSTTGHRAGVFKKPAKPHKSWKGKRTKGEITTENRGREGV) are disordered. The segment covering 9–25 (GVFKKPAKPHKSWKGKR) has biased composition (basic residues). Residues 26–40 (TKGEITTENRGREGV) are compositionally biased toward basic and acidic residues. A Bms1-type G domain is found at 83–243 (APCLVTILSL…LRTLNETKKK (161 aa)). Positions 354 to 433 (LEEADKEMRR…ASEMMFHDEI (80 aa)) are disordered. A compositionally biased stretch (acidic residues) spans 378 to 412 (DDSEDDEDEEDEDEDMDDEEEDKDLEEDDEEEDTP).

This sequence belongs to the TRAFAC class translation factor GTPase superfamily. Bms1-like GTPase family. TSR1 subfamily.

It is found in the nucleus. The protein localises to the nucleolus. In terms of biological role, required during maturation of the 40S ribosomal subunit in the nucleolus. In Caenorhabditis briggsae, this protein is Pre-rRNA-processing protein TSR1 homolog.